Consider the following 332-residue polypeptide: Lipoyl synthase (332 aa).

[4Fe-4S] cluster is bound by residues C74, C79, C85, C100, C104, C107, and S314. The 219-residue stretch at 85–303 (CFGKGTATFM…EEEAYKMGFT (219 aa)) folds into the Radical SAM core domain.

The protein belongs to the radical SAM superfamily. Lipoyl synthase family. The cofactor is [4Fe-4S] cluster.

Its subcellular location is the cytoplasm. The enzyme catalyses [[Fe-S] cluster scaffold protein carrying a second [4Fe-4S](2+) cluster] + N(6)-octanoyl-L-lysyl-[protein] + 2 oxidized [2Fe-2S]-[ferredoxin] + 2 S-adenosyl-L-methionine + 4 H(+) = [[Fe-S] cluster scaffold protein] + N(6)-[(R)-dihydrolipoyl]-L-lysyl-[protein] + 4 Fe(3+) + 2 hydrogen sulfide + 2 5'-deoxyadenosine + 2 L-methionine + 2 reduced [2Fe-2S]-[ferredoxin]. It participates in protein modification; protein lipoylation via endogenous pathway; protein N(6)-(lipoyl)lysine from octanoyl-[acyl-carrier-protein]: step 2/2. Its function is as follows. Catalyzes the radical-mediated insertion of two sulfur atoms into the C-6 and C-8 positions of the octanoyl moiety bound to the lipoyl domains of lipoate-dependent enzymes, thereby converting the octanoylated domains into lipoylated derivatives. The polypeptide is Lipoyl synthase (Paracidovorax citrulli (strain AAC00-1) (Acidovorax citrulli)).